Here is a 101-residue protein sequence, read N- to C-terminus: Putative pterin-4-alpha-carbinolamine dehydratase (101 aa).

It belongs to the pterin-4-alpha-carbinolamine dehydratase family.

It carries out the reaction (4aS,6R)-4a-hydroxy-L-erythro-5,6,7,8-tetrahydrobiopterin = (6R)-L-erythro-6,7-dihydrobiopterin + H2O. This Ralstonia pickettii (strain 12J) protein is Putative pterin-4-alpha-carbinolamine dehydratase.